The primary structure comprises 234 residues: Proteasome subunit alpha (234 aa).

The protein belongs to the peptidase T1A family. In terms of assembly, the 20S proteasome core is composed of 14 alpha and 14 beta subunits that assemble into four stacked heptameric rings, resulting in a barrel-shaped structure. The two inner rings, each composed of seven catalytic beta subunits, are sandwiched by two outer rings, each composed of seven alpha subunits. The catalytic chamber with the active sites is on the inside of the barrel. Has a gated structure, the ends of the cylinder being occluded by the N-termini of the alpha-subunits. Is capped at one or both ends by the proteasome regulatory ATPase, PAN.

It is found in the cytoplasm. The formation of the proteasomal ATPase PAN-20S proteasome complex, via the docking of the C-termini of PAN into the intersubunit pockets in the alpha-rings, triggers opening of the gate for substrate entry. Interconversion between the open-gate and close-gate conformations leads to a dynamic regulation of the 20S proteasome proteolysis activity. Component of the proteasome core, a large protease complex with broad specificity involved in protein degradation. The polypeptide is Proteasome subunit alpha (Picrophilus torridus (strain ATCC 700027 / DSM 9790 / JCM 10055 / NBRC 100828 / KAW 2/3)).